Here is a 190-residue protein sequence, read N- to C-terminus: Elongation factor P-like protein (190 aa).

It belongs to the elongation factor P family.

The sequence is that of Elongation factor P-like protein from Proteus mirabilis (strain HI4320).